The sequence spans 212 residues: Large ribosomal subunit protein bL25 (212 aa).

A disordered region spans residues 183–212 (HDLPVASIHKPKGAKADDAEGEEGEEGGEE). A compositionally biased stretch (acidic residues) spans 201–212 (AEGEEGEEGGEE).

The protein belongs to the bacterial ribosomal protein bL25 family. CTC subfamily. In terms of assembly, part of the 50S ribosomal subunit; part of the 5S rRNA/L5/L18/L25 subcomplex. Contacts the 5S rRNA. Binds to the 5S rRNA independently of L5 and L18.

Its function is as follows. This is one of the proteins that binds to the 5S RNA in the ribosome where it forms part of the central protuberance. This chain is Large ribosomal subunit protein bL25, found in Marinobacter nauticus (strain ATCC 700491 / DSM 11845 / VT8) (Marinobacter aquaeolei).